A 255-amino-acid polypeptide reads, in one-letter code: Tritrans,polycis-undecaprenyl-diphosphate synthase (geranylgeranyl-diphosphate specific) (255 aa).

Aspartate 34 is a catalytic residue. Aspartate 34 contacts Mg(2+). Substrate-binding positions include 35-38 (GNRR), histidine 51, and 79-81 (STE). Asparagine 82 functions as the Proton acceptor in the catalytic mechanism. Residues phenylalanine 83, arginine 85, arginine 204, and 210-212 (RIS) each bind substrate. A Mg(2+)-binding site is contributed by glutamate 223.

It belongs to the UPP synthase family. In terms of assembly, homodimer. The cofactor is Mg(2+).

It carries out the reaction geranylgeranyl diphosphate + 7 isopentenyl diphosphate = tri-trans,hepta-cis-undecaprenyl diphosphate + 7 diphosphate. In terms of biological role, catalyzes the sequential condensation of isopentenyl diphosphate (IPP) with geranylgeranyl diphosphate (GGPP) to yield (2Z,6Z,10Z,14Z,18Z,22Z,26Z,30E,34E,38E)-undecaprenyl diphosphate (tritrans,heptacis-UPP). It is probably the precursor of glycosyl carrier lipids. The protein is Tritrans,polycis-undecaprenyl-diphosphate synthase (geranylgeranyl-diphosphate specific) of Picrophilus torridus (strain ATCC 700027 / DSM 9790 / JCM 10055 / NBRC 100828 / KAW 2/3).